The following is a 273-amino-acid chain: Dermonecrotic toxin LapSicTox-alphaIB1b3 (273 aa).

H5 is an active-site residue. Mg(2+)-binding residues include E25 and D27. Catalysis depends on H41, which acts as the Nucleophile. 2 cysteine pairs are disulfide-bonded: C45-C51 and C47-C190. D85 contributes to the Mg(2+) binding site. Residue N250 is glycosylated (N-linked (GlcNAc...) asparagine).

The protein belongs to the arthropod phospholipase D family. Class II subfamily. Mg(2+) serves as cofactor. In terms of tissue distribution, expressed by the venom gland.

The protein resides in the secreted. It carries out the reaction an N-(acyl)-sphingosylphosphocholine = an N-(acyl)-sphingosyl-1,3-cyclic phosphate + choline. The enzyme catalyses an N-(acyl)-sphingosylphosphoethanolamine = an N-(acyl)-sphingosyl-1,3-cyclic phosphate + ethanolamine. The catalysed reaction is a 1-acyl-sn-glycero-3-phosphocholine = a 1-acyl-sn-glycero-2,3-cyclic phosphate + choline. It catalyses the reaction a 1-acyl-sn-glycero-3-phosphoethanolamine = a 1-acyl-sn-glycero-2,3-cyclic phosphate + ethanolamine. Functionally, dermonecrotic toxins cleave the phosphodiester linkage between the phosphate and headgroup of certain phospholipids (sphingolipid and lysolipid substrates), forming an alcohol (often choline) and a cyclic phosphate. This toxin acts on sphingomyelin (SM). It may also act on ceramide phosphoethanolamine (CPE), lysophosphatidylcholine (LPC) and lysophosphatidylethanolamine (LPE), but not on lysophosphatidylserine (LPS), and lysophosphatidylglycerol (LPG). It acts by transphosphatidylation, releasing exclusively cyclic phosphate products as second products. Induces dermonecrosis, hemolysis, increased vascular permeability, edema, inflammatory response, and platelet aggregation. In Loxosceles apachea (Apache recluse spider), this protein is Dermonecrotic toxin LapSicTox-alphaIB1b3.